The chain runs to 544 residues: Chaperonin GroEL (544 aa).

Residues 30 to 33 (TLGP), lysine 51, 87 to 91 (DGTTT), glycine 415, and aspartate 495 each bind ATP.

This sequence belongs to the chaperonin (HSP60) family. In terms of assembly, forms a cylinder of 14 subunits composed of two heptameric rings stacked back-to-back. Interacts with the co-chaperonin GroES.

The protein localises to the cytoplasm. It carries out the reaction ATP + H2O + a folded polypeptide = ADP + phosphate + an unfolded polypeptide.. Together with its co-chaperonin GroES, plays an essential role in assisting protein folding. The GroEL-GroES system forms a nano-cage that allows encapsulation of the non-native substrate proteins and provides a physical environment optimized to promote and accelerate protein folding. This is Chaperonin GroEL from Aeromonas salmonicida.